A 185-amino-acid polypeptide reads, in one-letter code: Elongation factor P (185 aa).

It belongs to the elongation factor P family.

Its subcellular location is the cytoplasm. The protein operates within protein biosynthesis; polypeptide chain elongation. In terms of biological role, involved in peptide bond synthesis. Stimulates efficient translation and peptide-bond synthesis on native or reconstituted 70S ribosomes in vitro. Probably functions indirectly by altering the affinity of the ribosome for aminoacyl-tRNA, thus increasing their reactivity as acceptors for peptidyl transferase. This is Elongation factor P from Anoxybacillus flavithermus (strain DSM 21510 / WK1).